A 64-amino-acid chain; its full sequence is Large ribosomal subunit protein uL30 (64 aa).

Belongs to the universal ribosomal protein uL30 family. As to quaternary structure, part of the 50S ribosomal subunit.

The chain is Large ribosomal subunit protein uL30 from Desulforudis audaxviator (strain MP104C).